Reading from the N-terminus, the 415-residue chain is Carboxypeptidase B (415 aa).

Positions 1–13 are cleaved as a signal peptide; sequence MLLLLALVSVALA. A propeptide spans 14 to 108 (activation peptide); sequence HASEEHFDGN…LESQFDSHTR (95 aa). The Peptidase M14 domain maps to 116–410; that stretch reads KYNKWETIEA…LAVKYIANYV (295 aa). A disulfide bridge connects residues Cys-171 and Cys-184. The Zn(2+) site is built by His-174 and Glu-177. Residues 174–177, Arg-232, and 249–250 each bind substrate; these read HARE and NR. Disulfide bonds link Cys-243–Cys-266 and Cys-257–Cys-271. Residue His-302 coordinates Zn(2+). Substrate contacts are provided by residues 303-304 and Tyr-354; that span reads SY. Glu-376 serves as the catalytic Proton donor/acceptor.

The protein belongs to the peptidase M14 family. Requires Zn(2+) as cofactor.

It is found in the secreted. The protein localises to the zymogen granule lumen. It catalyses the reaction Preferential release of a C-terminal lysine or arginine amino acid.. This Rattus norvegicus (Rat) protein is Carboxypeptidase B (Cpb1).